Reading from the N-terminus, the 165-residue chain is Nucleoside-triphosphatase THEP1 (165 aa).

ATP contacts are provided by residues Gly-7–Thr-14 and Leu-93–Gly-100.

It belongs to the THEP1 NTPase family.

The catalysed reaction is a ribonucleoside 5'-triphosphate + H2O = a ribonucleoside 5'-diphosphate + phosphate + H(+). In terms of biological role, has nucleotide phosphatase activity towards ATP, GTP, CTP, TTP and UTP. May hydrolyze nucleoside diphosphates with lower efficiency. The chain is Nucleoside-triphosphatase THEP1 from Archaeoglobus fulgidus (strain ATCC 49558 / DSM 4304 / JCM 9628 / NBRC 100126 / VC-16).